The sequence spans 304 residues: tRNA dimethylallyltransferase (304 aa).

Position 8 to 15 (8 to 15 (GPTASGKS)) interacts with ATP. Substrate is bound at residue 10–15 (TASGKS). Residues 33–36 (DSRQ) form an interaction with substrate tRNA region.

Belongs to the IPP transferase family. Monomer. Requires Mg(2+) as cofactor.

The enzyme catalyses adenosine(37) in tRNA + dimethylallyl diphosphate = N(6)-dimethylallyladenosine(37) in tRNA + diphosphate. Catalyzes the transfer of a dimethylallyl group onto the adenine at position 37 in tRNAs that read codons beginning with uridine, leading to the formation of N6-(dimethylallyl)adenosine (i(6)A). The chain is tRNA dimethylallyltransferase from Chlorobium luteolum (strain DSM 273 / BCRC 81028 / 2530) (Pelodictyon luteolum).